Consider the following 204-residue polypeptide: Thymidylate kinase (204 aa).

Residue 7-14 (GGEGVGKT) participates in ATP binding.

This sequence belongs to the thymidylate kinase family.

The catalysed reaction is dTMP + ATP = dTDP + ADP. Functionally, phosphorylation of dTMP to form dTDP in both de novo and salvage pathways of dTTP synthesis. The chain is Thymidylate kinase from Synechococcus sp. (strain JA-3-3Ab) (Cyanobacteria bacterium Yellowstone A-Prime).